Consider the following 293-residue polypeptide: Protein nud-2 (293 aa).

Residues Glu36–Leu147 adopt a coiled-coil conformation. The interval Lys239 to Ala293 is required for interaction with unc-83 isoform c.

Belongs to the nudE family. In terms of assembly, component of a dynein-regulating complex composed of at least lis-1 and nud-2. Interacts with lis-1; the interaction is direct. Interacts (via C-terminus) with unc-83; the interaction is direct, and is required for recruitment of nud-2 to the nuclear envelope. Expressed in ventral cord neurons, the pharynx, seam cells of the hypodermis and in vulval muscle cells.

It localises to the nucleus envelope. Part of a complex with lis-1, which is recruited to the nuclear envelope by unc-83, where, in turn, it recruits dynein to the nuclear surface and regulates nuclear migration in hypodermal precursor cells. Plays a role in GABAergic synaptic vesicle localization in the ventral nerve cord. This chain is Protein nud-2, found in Caenorhabditis elegans.